The primary structure comprises 352 residues: UDP-N-acetylglucosamine--N-acetylmuramyl-(pentapeptide) pyrophosphoryl-undecaprenol N-acetylglucosamine transferase (352 aa).

Serine 195 and glutamine 287 together coordinate UDP-N-acetyl-alpha-D-glucosamine.

Belongs to the glycosyltransferase 28 family. MurG subfamily.

It is found in the cell membrane. It catalyses the reaction Mur2Ac(oyl-L-Ala-gamma-D-Glu-L-Lys-D-Ala-D-Ala)-di-trans,octa-cis-undecaprenyl diphosphate + UDP-N-acetyl-alpha-D-glucosamine = beta-D-GlcNAc-(1-&gt;4)-Mur2Ac(oyl-L-Ala-gamma-D-Glu-L-Lys-D-Ala-D-Ala)-di-trans,octa-cis-undecaprenyl diphosphate + UDP + H(+). The protein operates within cell wall biogenesis; peptidoglycan biosynthesis. Functionally, cell wall formation. Catalyzes the transfer of a GlcNAc subunit on undecaprenyl-pyrophosphoryl-MurNAc-pentapeptide (lipid intermediate I) to form undecaprenyl-pyrophosphoryl-MurNAc-(pentapeptide)GlcNAc (lipid intermediate II). This Streptococcus pneumoniae serotype 4 (strain ATCC BAA-334 / TIGR4) protein is UDP-N-acetylglucosamine--N-acetylmuramyl-(pentapeptide) pyrophosphoryl-undecaprenol N-acetylglucosamine transferase.